The sequence spans 381 residues: Protein YkfC (381 aa).

Residues 72-337 (LRDELLSGHY…DGFIFLGHRL (266 aa)) enclose the Reverse transcriptase domain. Asp166, Asp284, and Asp285 together coordinate Mg(2+).

It belongs to the bacterial reverse transcriptase family.

This chain is Protein YkfC (ykfC), found in Escherichia coli (strain K12).